Reading from the N-terminus, the 92-residue chain is Cell wall protein CWP2 (92 aa).

Positions 1 to 20 (MQFSTVASVAFVALANFVAA) are cleaved as a signal peptide. One copy of the PIR1/2/3 repeat lies at 24–37 (AAISQITDGQIQAT). Positions 41–60 (TTEATTTAAPSSTVETVSPS) are disordered. A lipid anchor (GPI-anchor amidated asparagine) is attached at Asn-71. Positions 72 to 92 (GAAKAAVGMGAGALAAAAMLL) are cleaved as a propeptide — removed in mature form.

The protein belongs to the SRP1/TIP1 family. In terms of processing, extensively O-glycosylated. The GPI-anchor is attached to the protein in the endoplasmic reticulum and serves to target the protein to the cell surface. There, the glucosamine-inositol phospholipid moiety is cleaved off and the GPI-modified mannoprotein is covalently attached via its lipidless GPI glycan remnant to the 1,6-beta-glucan of the outer cell wall layer. Post-translationally, covalently linked to beta-1,3-glucan of the inner cell wall layer via an alkali-sensitive ester linkage between the gamma-carboxyl group of glutamic acids, arising from a specific glutamine within the PIR1/2/3 repeat, and hydroxyl groups of glucoses of beta-1,3-glucan chains.

It is found in the secreted. Its subcellular location is the cell wall. It localises to the membrane. Functionally, component of the cell wall. The protein is Cell wall protein CWP2 (CWP2) of Saccharomyces cerevisiae (strain ATCC 204508 / S288c) (Baker's yeast).